Consider the following 167-residue polypeptide: Ubiquitin-conjugating enzyme E2 2 (167 aa).

In terms of domain architecture, UBC core spans 4-150; it reads PARRRLMRDF…VKETVEKSWE (147 aa). The active-site Glycyl thioester intermediate is the Cys-88. The disordered stretch occupies residues 148–167; the sequence is SWEDNMDDMDDSDEDDEDDE. Over residues 151-167 the composition is skewed to acidic residues; that stretch reads DNMDDMDDSDEDDEDDE.

The protein belongs to the ubiquitin-conjugating enzyme family.

It is found in the cytoplasm. The protein localises to the nucleus. It carries out the reaction S-ubiquitinyl-[E1 ubiquitin-activating enzyme]-L-cysteine + [E2 ubiquitin-conjugating enzyme]-L-cysteine = [E1 ubiquitin-activating enzyme]-L-cysteine + S-ubiquitinyl-[E2 ubiquitin-conjugating enzyme]-L-cysteine.. The protein operates within protein modification; protein ubiquitination. Functionally, catalyzes the covalent attachment of ubiquitin to other proteins. Plays a role in transcription regulation by catalyzing the monoubiquitination of histone H2B to form H2BK123ub1. H2BK123ub1 gives a specific tag for epigenetic transcriptional activation and is also a prerequisite for H3K4me and H3K79me formation. Also involved in postreplication repair of UV-damaged DNA, in N-end rule-dependent protein degradation and in sporulation. This is Ubiquitin-conjugating enzyme E2 2 (UBC2) from Candida glabrata (strain ATCC 2001 / BCRC 20586 / JCM 3761 / NBRC 0622 / NRRL Y-65 / CBS 138) (Yeast).